The sequence spans 296 residues: Sulfotransferase 1C2 (296 aa).

49 to 54 provides a ligand contact to 3'-phosphoadenylyl sulfate; that stretch reads KSGTTW. 107 to 109 contributes to the substrate binding site; sequence RTH. Catalysis depends on His-109, which acts as the Proton acceptor. 3'-phosphoadenylyl sulfate contacts are provided by residues Arg-131, Ser-139, Tyr-194, and 228–233; that span reads TSFEKM. At Ser-139 the chain carries Phosphoserine. Ser-254 is modified (phosphoserine). 256–260 is a binding site for 3'-phosphoadenylyl sulfate; it reads FMRKG.

This sequence belongs to the sulfotransferase 1 family. Highly expressed in kidney and at lower levels in stomach and liver. More specifically found in the epithelia of proximal tubules of the kidney, of the bile duct, of the gastric mucosa, and in hepatocytes.

It is found in the cytoplasm. Its subcellular location is the lysosome. The protein localises to the mitochondrion. It catalyses the reaction a phenol + 3'-phosphoadenylyl sulfate = an aryl sulfate + adenosine 3',5'-bisphosphate + H(+). The enzyme catalyses cholesterol + 3'-phosphoadenylyl sulfate = cholesterol sulfate + adenosine 3',5'-bisphosphate + H(+). In terms of biological role, sulfotransferase that utilizes 3'-phospho-5'-adenylyl sulfate (PAPS) to catalyze the sulfate conjugation of phenolic compounds. Does not transfer sulfate to steroids, dopamine, acetaminophen, or alpha-naphthol. Except in mitochondria, where it can add sulfate to cholesterol producing cholesterol sulfate, which alters mitochondrial membrane organization, and impacts protein complex mobility increasing state-III respiration, thereby modulating mitochondrial respiration. Catalyzes the sulfation of the carcinogenic N-hydroxy-2-acetylaminofluorene leading to highly reactive intermediates capable of forming DNA adducts, potentially resulting in mutagenesis. This is Sulfotransferase 1C2 (Sult1c2) from Rattus norvegicus (Rat).